The primary structure comprises 294 residues: Non-selective voltage-gated ion channel VDAC2 (294 aa).

The residue at position 2 (A2) is an N-acetylalanine. 2 residues coordinate ATP: K23 and K31. K31 carries the post-translational modification N6-acetyllysine; alternate. The residue at position 31 (K31) is an N6-succinyllysine; alternate. K31 is covalently cross-linked (Glycyl lysine isopeptide (Lys-Gly) (interchain with G-Cter in ubiquitin); alternate). Beta stranded transmembrane passes span 37–46 (LVKLDVKTKS) and 50–58 (VEFSTSGSS). A Glycyl lysine isopeptide (Lys-Gly) (interchain with G-Cter in ubiquitin) cross-link involves residue K64. Residues 65-75 (VTGTLETKYKW) form a beta stranded membrane-spanning segment. At Y78 the chain carries Phosphotyrosine. 3 consecutive transmembrane segments (beta stranded) span residues 80-87 (LTFTEKWN), 91-100 (TLGTEIAIED), and 106-115 (LKLTFDTTFS). At T118 the chain carries Phosphothreonine. An N6-acetyllysine; alternate modification is found at K120. K120 participates in a covalent cross-link: Glycyl lysine isopeptide (Lys-Gly) (interchain with G-Cter in ubiquitin); alternate. A Glycyl lysine isopeptide (Lys-Gly) (interchain with G-Cter in ubiquitin) cross-link involves residue K121. A run of 4 beta stranded transmembrane segments spans residues 122–131 (SGKIKSSYKR), 134–141 (VNLGCDVD), 148–156 (AIHGSAVFG), and 161–169 (LAGYQMTFD). A Glycyl lysine isopeptide (Lys-Gly) (interchain with G-Cter in ubiquitin) cross-link involves residue K172. A run of 6 beta stranded transmembrane segments spans residues 174–186 (KLTR…GYRT), 189–196 (FQLHTNVN), 200–209 (EFGGSIYQKV), 213–222 (LDTSVNLAWT), 229–238 (RFGIAAKYQL), and 242–249 (ASISAKVN). Phosphoserine is present on S251. NAD(+) contacts are provided by residues 253–255 (LIG) and 271–275 (SALVD). 2 beta stranded membrane-spanning segments follow: residues 253–262 (LIGVGYTQTL) and 265–274 (GVKLTLSALV). The residue at position 277 (K277) is an N6-acetyllysine; alternate. Residue K277 forms a Glycyl lysine isopeptide (Lys-Gly) (interchain with G-Cter in ubiquitin); alternate linkage. Residues 284 to 293 (HKLGLALELE) form a beta stranded membrane-spanning segment.

The protein belongs to the eukaryotic mitochondrial porin family. In terms of assembly, monomer, homodimer and higher order oligomers; formation of higher order structures is necessary for scramblase activity. Interacts with ARMC12 in a TBC1D21-dependent manner. Interacts with KLC3. Interacts with SPATA33. Interacts with PPP3CC in a SPATA33-dependent manner. Post-translationally, ubiquitinated by PRKN during mitophagy, leading to its degradation and enhancement of mitophagy. Deubiquitinated by USP30.

It localises to the mitochondrion outer membrane. It is found in the membrane. The enzyme catalyses chloride(in) = chloride(out). It carries out the reaction K(+)(in) = K(+)(out). The catalysed reaction is a 1,2-diacyl-sn-glycero-3-phospho-L-serine(in) = a 1,2-diacyl-sn-glycero-3-phospho-L-serine(out). It catalyses the reaction a 1,2-diacyl-sn-glycero-3-phosphocholine(in) = a 1,2-diacyl-sn-glycero-3-phosphocholine(out). The enzyme catalyses a 1,2-diacyl-sn-glycero-3-phospho-(1D-myo-inositol)(in) = a 1,2-diacyl-sn-glycero-3-phospho-(1D-myo-inositol)(out). Its function is as follows. Non-selective voltage-gated ion channel that mediates the transport of anions and cations through the mitochondrion outer membrane and plasma membrane. The channel adopts an open conformation at zero mV and a closed conformation at both positive and negative potentials. There are two populations of channels; the main that functions in a lower open-state conductance with lower ion selectivity, that switch, in a voltage-dependent manner, from the open to a low-conducting 'closed' state and the other that has a normal ion selectivity in the typical high conductance, 'open' state. Binds various lipids, including the sphingolipid ceramide, the phospholipid phosphatidylcholine, and the sterols cholesterol and oxysterol. Binding of ceramide promotes the mitochondrial outer membrane permeabilization (MOMP) apoptotic pathway. Catalyzes the scrambling of phospholipids across the outer mitochondrial membrane; the mechanism is unrelated to channel activity and is capable of translocating both anionic and zwitterionic phospholipids. This is Non-selective voltage-gated ion channel VDAC2 from Sus scrofa (Pig).